We begin with the raw amino-acid sequence, 155 residues long: Cardio acceleratory peptide 2b (155 aa).

A signal peptide spans 1–26 (MKAIFSLYNIVSAILLLVLLAEFSTA). Positions 27–33 (ELNHDKN) are excised as a propeptide. Residue valine 47 is modified to Valine amide. A propeptide spanning residues 50 to 85 (SDPSLANSLRDASDAAVFDGLYGDASQEDYNEADYQ) is cleaved from the precursor. Valine 96 bears the Valine amide mark. The propeptide occupies 99–117 (SDAELRKFAHLLALQQVLD). The residue at position 134 (leucine 134) is a Leucine amide. The propeptide occupies 138-155 (SVDAKAFSDASKGQQEFN).

The protein belongs to the pyrokinin family.

The protein localises to the secreted. Its function is as follows. CAP-1 and CAP-2, but not CAP-3 are ligands for the Capa receptor. CAP-1 and CAP-2 are probably components of the signal transduction pathway that leads to Malpighian tubule fluid secretion via the second messenger nitric oxide. This is Cardio acceleratory peptide 2b from Drosophila pseudoobscura pseudoobscura (Fruit fly).